Reading from the N-terminus, the 239-residue chain is tRNA (guanine-N(1)-)-methyltransferase (239 aa).

S-adenosyl-L-methionine-binding positions include Gly-110 and 130–135; that span reads VGDYVL.

Belongs to the RNA methyltransferase TrmD family. In terms of assembly, homodimer.

It localises to the cytoplasm. It carries out the reaction guanosine(37) in tRNA + S-adenosyl-L-methionine = N(1)-methylguanosine(37) in tRNA + S-adenosyl-L-homocysteine + H(+). Its function is as follows. Specifically methylates guanosine-37 in various tRNAs. The polypeptide is tRNA (guanine-N(1)-)-methyltransferase (Borrelia hermsii (strain HS1 / DAH)).